Consider the following 239-residue polypeptide: Small ribosomal subunit protein uS3 (239 aa).

Residues 39 to 107 (VREFLRKKLA…ATSINIEEIR (69 aa)) form the KH type-2 domain. Residues 215 to 239 (TSNTNELSDEKRNRRKPRNANRRKE) are disordered. A compositionally biased stretch (basic residues) spans 227 to 239 (NRRKPRNANRRKE).

It belongs to the universal ribosomal protein uS3 family. As to quaternary structure, part of the 30S ribosomal subunit. Forms a tight complex with proteins S10 and S14.

Its function is as follows. Binds the lower part of the 30S subunit head. Binds mRNA in the 70S ribosome, positioning it for translation. This is Small ribosomal subunit protein uS3 from Dichelobacter nodosus (strain VCS1703A).